We begin with the raw amino-acid sequence, 212 residues long: 3-isopropylmalate dehydratase small subunit (212 aa).

This sequence belongs to the LeuD family. LeuD type 1 subfamily. Heterodimer of LeuC and LeuD.

The catalysed reaction is (2R,3S)-3-isopropylmalate = (2S)-2-isopropylmalate. Its pathway is amino-acid biosynthesis; L-leucine biosynthesis; L-leucine from 3-methyl-2-oxobutanoate: step 2/4. Functionally, catalyzes the isomerization between 2-isopropylmalate and 3-isopropylmalate, via the formation of 2-isopropylmaleate. This chain is 3-isopropylmalate dehydratase small subunit, found in Thiobacillus denitrificans (strain ATCC 25259 / T1).